We begin with the raw amino-acid sequence, 592 residues long: Aspartate--tRNA ligase (592 aa).

Glu-176 lines the L-aspartate pocket. Residues Gln-200–Lys-203 are aspartate. Arg-222 contacts L-aspartate. ATP-binding positions include Arg-222 to Glu-224 and Gln-231. His-450 is an L-aspartate binding site. Glu-484 serves as a coordination point for ATP. L-aspartate is bound at residue Arg-491. Position 536-539 (Gly-536–Arg-539) interacts with ATP.

Belongs to the class-II aminoacyl-tRNA synthetase family. Type 1 subfamily. In terms of assembly, homodimer.

It is found in the cytoplasm. The catalysed reaction is tRNA(Asp) + L-aspartate + ATP = L-aspartyl-tRNA(Asp) + AMP + diphosphate. Its function is as follows. Catalyzes the attachment of L-aspartate to tRNA(Asp) in a two-step reaction: L-aspartate is first activated by ATP to form Asp-AMP and then transferred to the acceptor end of tRNA(Asp). This is Aspartate--tRNA ligase from Macrococcus caseolyticus (strain JCSC5402) (Macrococcoides caseolyticum).